The chain runs to 312 residues: Type II methyltransferase M.NgoMIV (312 aa).

An SAM-dependent MTase C5-type domain is found at F3–E311. Residue C74 is part of the active site.

Belongs to the class I-like SAM-binding methyltransferase superfamily. C5-methyltransferase family.

The enzyme catalyses a 2'-deoxycytidine in DNA + S-adenosyl-L-methionine = a 5-methyl-2'-deoxycytidine in DNA + S-adenosyl-L-homocysteine + H(+). A methylase, recognizes the double-stranded sequence 5'-GCCGGC-3', methylates C-2 on both strands, and protects the DNA from cleavage by the NgoMIV endonuclease. This chain is Type II methyltransferase M.NgoMIV (ngoMIVM), found in Neisseria gonorrhoeae.